We begin with the raw amino-acid sequence, 144 residues long: Superoxide dismutase [Mn], mitochondrial (144 aa).

Residues His-10, His-58, and Asp-143 each coordinate Mn(2+).

This sequence belongs to the iron/manganese superoxide dismutase family. As to quaternary structure, homotetramer. Mn(2+) is required as a cofactor.

It localises to the mitochondrion matrix. The enzyme catalyses 2 superoxide + 2 H(+) = H2O2 + O2. Destroys superoxide anion radicals which are normally produced within the cells and which are toxic to biological systems. The chain is Superoxide dismutase [Mn], mitochondrial from Apostichopus californicus (California sea cucumber).